A 678-amino-acid polypeptide reads, in one-letter code: Protein CASP (678 aa).

The Cytoplasmic portion of the chain corresponds to 1–619; it reads MAANVGSMFQ…LVLSNKMART (619 aa). Coiled-coil stretches lie at residues 67 to 450 and 502 to 556; these read LLKS…QDLS and LSII…FLQS. Ser586 is subject to Phosphoserine. Residues 620-640 traverse the membrane as a helical; Anchor for type IV membrane protein segment; it reads IGFFYTLFLHCLVFLVLYKLA. Residues 641–678 are Lumenal-facing; it reads WSESMERDCATFCAKKFADHLHKFHENDNGAAAGDLWQ.

This sequence belongs to the CASP family. Homodimer; disulfide-linked. Interacts with GOLGA5.

It localises to the golgi apparatus membrane. In terms of biological role, may be involved in intra-Golgi retrograde transport. This Pongo abelii (Sumatran orangutan) protein is Protein CASP (CUTL1).